The chain runs to 452 residues: Adenylosuccinate synthetase 2 (452 aa).

Residues 19-25 (GDEGKAR) and 47-49 (GHT) contribute to the GTP site. The Proton acceptor role is filled by D20. The Mg(2+) site is built by D20 and G47. IMP contacts are provided by residues 20 to 23 (DEGK), 45 to 48 (NAGH), T131, R145, Q223, T238, and R338. H48 functions as the Proton donor in the catalytic mechanism. 334–340 (TGTGRPR) serves as a coordination point for substrate. GTP is bound by residues R340, 366-368 (KCD), and 437-439 (GLG).

The protein belongs to the adenylosuccinate synthetase family. In terms of assembly, homodimer. Requires Mg(2+) as cofactor.

It is found in the cytoplasm. The catalysed reaction is IMP + L-aspartate + GTP = N(6)-(1,2-dicarboxyethyl)-AMP + GDP + phosphate + 2 H(+). The protein operates within purine metabolism; AMP biosynthesis via de novo pathway; AMP from IMP: step 1/2. Its function is as follows. Plays an important role in the de novo pathway of purine nucleotide biosynthesis. Catalyzes the first committed step in the biosynthesis of AMP from IMP. The chain is Adenylosuccinate synthetase 2 from Cupriavidus pinatubonensis (strain JMP 134 / LMG 1197) (Cupriavidus necator (strain JMP 134)).